A 131-amino-acid polypeptide reads, in one-letter code: Thioredoxin H4-1 (131 aa).

Residues 3–129 (SCVGKERSDE…LEKKVAALAD (127 aa)) enclose the Thioredoxin domain. Active-site nucleophile residues include cysteine 55 and cysteine 58. Cysteines 55 and 58 form a disulfide.

Belongs to the thioredoxin family. Plant H-type subfamily.

The protein resides in the cytoplasm. In terms of biological role, probable thiol-disulfide oxidoreductase that may be involved in the redox regulation of a number of cytosolic enzymes. This is Thioredoxin H4-1 from Oryza sativa subsp. japonica (Rice).